Reading from the N-terminus, the 98-residue chain is Co-chaperonin GroES (98 aa).

Belongs to the GroES chaperonin family. As to quaternary structure, heptamer of 7 subunits arranged in a ring. Interacts with the chaperonin GroEL.

The protein resides in the cytoplasm. Functionally, together with the chaperonin GroEL, plays an essential role in assisting protein folding. The GroEL-GroES system forms a nano-cage that allows encapsulation of the non-native substrate proteins and provides a physical environment optimized to promote and accelerate protein folding. GroES binds to the apical surface of the GroEL ring, thereby capping the opening of the GroEL channel. In Beutenbergia cavernae (strain ATCC BAA-8 / DSM 12333 / CCUG 43141 / JCM 11478 / NBRC 16432 / NCIMB 13614 / HKI 0122), this protein is Co-chaperonin GroES.